The sequence spans 83 residues: DNA-directed RNA polymerase subunit Rpo5 (83 aa).

The protein belongs to the archaeal Rpo5/eukaryotic RPB5 RNA polymerase subunit family. Part of the RNA polymerase complex.

It is found in the cytoplasm. The catalysed reaction is RNA(n) + a ribonucleoside 5'-triphosphate = RNA(n+1) + diphosphate. Functionally, DNA-dependent RNA polymerase (RNAP) catalyzes the transcription of DNA into RNA using the four ribonucleoside triphosphates as substrates. The polypeptide is DNA-directed RNA polymerase subunit Rpo5 (Metallosphaera sedula (strain ATCC 51363 / DSM 5348 / JCM 9185 / NBRC 15509 / TH2)).